Consider the following 461-residue polypeptide: Acetylcholine receptor subunit alpha (461 aa).

The signal sequence occupies residues 1 to 24 (MILCSYWHVGLVLLLFSCCGLVLG). At 25–234 (SEHETRLVAN…ITYHFIMQRI (210 aa)) the chain is on the extracellular side. 2 cysteine pairs are disulfide-bonded: Cys-152–Cys-166 and Cys-216–Cys-217. Asn-165 is a glycosylation site (N-linked (GlcNAc...) asparagine). The next 3 membrane-spanning stretches (helical) occupy residues 235–259 (PLYF…VFYL), 267–285 (MTLS…LVIV), and 301–320 (YMLF…VVVI). Topologically, residues 321 to 432 (NTHHRSPSTH…WKYVAMVIDH (112 aa)) are cytoplasmic. Residues 433–451 (ILLCVFMLICIIGTVSVFA) traverse the membrane as a helical segment.

Belongs to the ligand-gated ion channel (TC 1.A.9) family. Acetylcholine receptor (TC 1.A.9.1) subfamily. Alpha-1/CHRNA1 sub-subfamily. As to quaternary structure, pentamer of two alpha chains, and one each of the beta, delta, and gamma chains.

The protein localises to the postsynaptic cell membrane. It is found in the cell membrane. It carries out the reaction K(+)(in) = K(+)(out). It catalyses the reaction Na(+)(in) = Na(+)(out). Upon acetylcholine binding, the AChR responds by an extensive change in conformation that affects all subunits and leads to opening of an ion-conducting channel across the plasma membrane. The sequence is that of Acetylcholine receptor subunit alpha (CHRNA1) from Tetronarce californica (Pacific electric ray).